A 398-amino-acid chain; its full sequence is uncharacterized protein (398 aa).

The segment at K313 to V398 is disordered. 2 stretches are compositionally biased toward low complexity: residues T314–S333 and G343–V398.

This is an uncharacterized protein from Acanthamoeba polyphaga mimivirus (APMV).